Consider the following 429-residue polypeptide: Tryptophan synthase beta chain 2 (429 aa).

The tract at residues N18–E40 is disordered. N6-(pyridoxal phosphate)lysine is present on K110.

The protein belongs to the TrpB family. In terms of assembly, tetramer of two alpha and two beta chains. Pyridoxal 5'-phosphate serves as cofactor.

It catalyses the reaction (1S,2R)-1-C-(indol-3-yl)glycerol 3-phosphate + L-serine = D-glyceraldehyde 3-phosphate + L-tryptophan + H2O. Its pathway is amino-acid biosynthesis; L-tryptophan biosynthesis; L-tryptophan from chorismate: step 5/5. The beta subunit is responsible for the synthesis of L-tryptophan from indole and L-serine. The polypeptide is Tryptophan synthase beta chain 2 (trpB2) (Methanothermobacter thermautotrophicus (strain ATCC 29096 / DSM 1053 / JCM 10044 / NBRC 100330 / Delta H) (Methanobacterium thermoautotrophicum)).